The chain runs to 261 residues: Hydroxyethylthiazole kinase (261 aa).

Met-40 contributes to the substrate binding site. ATP is bound by residues Lys-116 and Thr-162. Gly-189 is a binding site for substrate.

This sequence belongs to the Thz kinase family. Mg(2+) is required as a cofactor.

It catalyses the reaction 5-(2-hydroxyethyl)-4-methylthiazole + ATP = 4-methyl-5-(2-phosphooxyethyl)-thiazole + ADP + H(+). Its pathway is cofactor biosynthesis; thiamine diphosphate biosynthesis; 4-methyl-5-(2-phosphoethyl)-thiazole from 5-(2-hydroxyethyl)-4-methylthiazole: step 1/1. In terms of biological role, catalyzes the phosphorylation of the hydroxyl group of 4-methyl-5-beta-hydroxyethylthiazole (THZ). The sequence is that of Hydroxyethylthiazole kinase from Methanosarcina acetivorans (strain ATCC 35395 / DSM 2834 / JCM 12185 / C2A).